The primary structure comprises 594 residues: Proline--tRNA ligase (594 aa).

It belongs to the class-II aminoacyl-tRNA synthetase family. ProS type 1 subfamily. As to quaternary structure, homodimer.

The protein resides in the cytoplasm. The catalysed reaction is tRNA(Pro) + L-proline + ATP = L-prolyl-tRNA(Pro) + AMP + diphosphate. Catalyzes the attachment of proline to tRNA(Pro) in a two-step reaction: proline is first activated by ATP to form Pro-AMP and then transferred to the acceptor end of tRNA(Pro). As ProRS can inadvertently accommodate and process non-cognate amino acids such as alanine and cysteine, to avoid such errors it has two additional distinct editing activities against alanine. One activity is designated as 'pretransfer' editing and involves the tRNA(Pro)-independent hydrolysis of activated Ala-AMP. The other activity is designated 'posttransfer' editing and involves deacylation of mischarged Ala-tRNA(Pro). The misacylated Cys-tRNA(Pro) is not edited by ProRS. This Synechococcus sp. (strain WH7803) protein is Proline--tRNA ligase.